The primary structure comprises 112 residues: Cell cycle protein GpsB (112 aa).

The stretch at 38–72 (IKDYEAFHKEFEQLKQQNARLKRELEEQKLVATQV) forms a coiled coil.

Belongs to the GpsB family. In terms of assembly, forms polymers through the coiled coil domains. Interacts with PBP1, MreC and EzrA.

It is found in the cytoplasm. Functionally, divisome component that associates with the complex late in its assembly, after the Z-ring is formed, and is dependent on DivIC and PBP2B for its recruitment to the divisome. Together with EzrA, is a key component of the system that regulates PBP1 localization during cell cycle progression. Its main role could be the removal of PBP1 from the cell pole after pole maturation is completed. Also contributes to the recruitment of PBP1 to the division complex. Not essential for septum formation. The polypeptide is Cell cycle protein GpsB (Bacillus cereus (strain ZK / E33L)).